Reading from the N-terminus, the 136-residue chain is Prefoldin subunit alpha (136 aa).

The protein belongs to the prefoldin subunit alpha family. In terms of assembly, heterohexamer of two alpha and four beta subunits.

It is found in the cytoplasm. Molecular chaperone capable of stabilizing a range of proteins. Seems to fulfill an ATP-independent, HSP70-like function in archaeal de novo protein folding. The polypeptide is Prefoldin subunit alpha (Pyrobaculum arsenaticum (strain DSM 13514 / JCM 11321 / PZ6)).